The primary structure comprises 311 residues: 4-hydroxy-tetrahydrodipicolinate synthase (311 aa).

A pyruvate-binding site is contributed by Thr-49. Tyr-138 (proton donor/acceptor) is an active-site residue. Catalysis depends on Lys-166, which acts as the Schiff-base intermediate with substrate. Residue Ile-207 coordinates pyruvate.

This sequence belongs to the DapA family. Homotetramer; dimer of dimers.

Its subcellular location is the cytoplasm. It catalyses the reaction L-aspartate 4-semialdehyde + pyruvate = (2S,4S)-4-hydroxy-2,3,4,5-tetrahydrodipicolinate + H2O + H(+). Its pathway is amino-acid biosynthesis; L-lysine biosynthesis via DAP pathway; (S)-tetrahydrodipicolinate from L-aspartate: step 3/4. Functionally, catalyzes the condensation of (S)-aspartate-beta-semialdehyde [(S)-ASA] and pyruvate to 4-hydroxy-tetrahydrodipicolinate (HTPA). In Limosilactobacillus fermentum (strain NBRC 3956 / LMG 18251) (Lactobacillus fermentum), this protein is 4-hydroxy-tetrahydrodipicolinate synthase.